Reading from the N-terminus, the 579-residue chain is Protein O-linked-mannose beta-1,4-N-acetylglucosaminyltransferase 2 (579 aa).

The Cytoplasmic segment spans residues 1 to 4 (MGVG). A helical; Signal-anchor for type II membrane protein membrane pass occupies residues 5-25 (TLLNGLLVSVVAALLWKYSKL). The Lumenal segment spans residues 26–579 (SEHAALLEEE…PFADVLMCRT (554 aa)). 3 N-linked (GlcNAc...) asparagine glycosylation sites follow: asparagine 98, asparagine 275, and asparagine 542. One can recognise a Fibronectin type-III domain in the interval 480–579 (HPGRVRDARC…PFADVLMCRT (100 aa)).

The protein belongs to the glycosyltransferase 61 family.

Its subcellular location is the endoplasmic reticulum membrane. The enzyme catalyses 3-O-(alpha-D-mannosyl)-L-threonyl-[protein] + UDP-N-acetyl-alpha-D-glucosamine = 3-O-(N-acetyl-beta-D-glucosaminyl-(1-&gt;4)-alpha-D-mannosyl)-L-threonyl-[protein] + UDP + H(+). The protein operates within protein modification; protein glycosylation. In terms of biological role, O-linked mannose beta-1,4-N-acetylglucosaminyltransferase that transfers UDP-N-acetyl-D-glucosamine to the 4-position of the mannose to generate N-acetyl-D-glucosamine-beta-1,4-O-D-mannosylprotein. Involved in the biosynthesis of the phosphorylated O-mannosyl trisaccharide (N-acetylgalactosamine-beta-3-N-acetylglucosamine-beta-4-(phosphate-6-)mannose), a carbohydrate structure present in alpha-dystroglycan (DAG1), which is required for binding laminin G-like domain-containing extracellular proteins with high affinity. The protein is Protein O-linked-mannose beta-1,4-N-acetylglucosaminyltransferase 2 (pomgnt2) of Tetraodon nigroviridis (Spotted green pufferfish).